The primary structure comprises 345 residues: Dihydroorotate dehydrogenase (quinone) (345 aa).

FMN contacts are provided by residues A65 to K69 and T89. Substrate is bound at residue K69. N114–F118 is a binding site for substrate. The FMN site is built by N142 and N175. N175 is a binding site for substrate. S178 (nucleophile) is an active-site residue. Residue N180 coordinates substrate. FMN-binding residues include K220 and T248. N249–T250 serves as a coordination point for substrate. FMN-binding positions include G271, G300, and Y321–T322.

Belongs to the dihydroorotate dehydrogenase family. Type 2 subfamily. In terms of assembly, monomer. Requires FMN as cofactor.

Its subcellular location is the cell membrane. It catalyses the reaction (S)-dihydroorotate + a quinone = orotate + a quinol. Its pathway is pyrimidine metabolism; UMP biosynthesis via de novo pathway; orotate from (S)-dihydroorotate (quinone route): step 1/1. Functionally, catalyzes the conversion of dihydroorotate to orotate with quinone as electron acceptor. This chain is Dihydroorotate dehydrogenase (quinone), found in Burkholderia mallei (strain NCTC 10247).